The following is a 61-amino-acid chain: Keratin-associated protein 8-1 (61 aa).

The segment at 13–49 (GCYWGSYGYPLGYSVGCGYGSTYSPVGYGLGYGYNGC) is 11 X 2 AA repeats of G-[YCGS].

The protein belongs to the KRTAP type 8 family. As to quaternary structure, interacts with hair keratins. As to expression, expression restricted exclusively to the cortical cells of hair follicles.

In the hair cortex, hair keratin intermediate filaments are embedded in an interfilamentous matrix, consisting of hair keratin-associated proteins (KRTAP), which are essential for the formation of a rigid and resistant hair shaft through their extensive disulfide bond cross-linking with abundant cysteine residues of hair keratins. The matrix proteins include the high-sulfur and high-glycine-tyrosine keratins. The protein is Keratin-associated protein 8-1 (Krtap8-1) of Mus musculus (Mouse).